The primary structure comprises 446 residues: Putative ankyrin repeat protein L273 (446 aa).

6 ANK repeats span residues 71 to 100, 124 to 153, 206 to 237, 245 to 277, 303 to 332, and 365 to 394; these read NGEF…KSNM, DHNK…RMRP, TDIE…KILM, VWVS…KMHV, ELEY…NSYY, and YTDI…QQII.

The chain is Putative ankyrin repeat protein L273 from Acanthamoeba polyphaga (Amoeba).